We begin with the raw amino-acid sequence, 482 residues long: tRNA sulfurtransferase (482 aa).

The region spanning 61 to 165 (DVTLSVLTQT…NDKLNLIIAR (105 aa)) is the THUMP domain. ATP is bound by residues 183 to 184 (LI), K265, G287, and Q296. C344 and C456 are oxidised to a cystine. Residues 404–482 (LGSDVVVLDI…GYKNVKVYRP (79 aa)) form the Rhodanese domain. C456 acts as the Cysteine persulfide intermediate in catalysis.

Belongs to the ThiI family.

It is found in the cytoplasm. It catalyses the reaction [ThiI sulfur-carrier protein]-S-sulfanyl-L-cysteine + a uridine in tRNA + 2 reduced [2Fe-2S]-[ferredoxin] + ATP + H(+) = [ThiI sulfur-carrier protein]-L-cysteine + a 4-thiouridine in tRNA + 2 oxidized [2Fe-2S]-[ferredoxin] + AMP + diphosphate. The enzyme catalyses [ThiS sulfur-carrier protein]-C-terminal Gly-Gly-AMP + S-sulfanyl-L-cysteinyl-[cysteine desulfurase] + AH2 = [ThiS sulfur-carrier protein]-C-terminal-Gly-aminoethanethioate + L-cysteinyl-[cysteine desulfurase] + A + AMP + 2 H(+). The protein operates within cofactor biosynthesis; thiamine diphosphate biosynthesis. Functionally, catalyzes the ATP-dependent transfer of a sulfur to tRNA to produce 4-thiouridine in position 8 of tRNAs, which functions as a near-UV photosensor. Also catalyzes the transfer of sulfur to the sulfur carrier protein ThiS, forming ThiS-thiocarboxylate. This is a step in the synthesis of thiazole, in the thiamine biosynthesis pathway. The sulfur is donated as persulfide by IscS. The sequence is that of tRNA sulfurtransferase from Aliivibrio fischeri (strain MJ11) (Vibrio fischeri).